The following is a 359-amino-acid chain: Trans-enoyl reductase RAP1 (359 aa).

49–52 contributes to the NADP(+) binding site; the sequence is CDFK. 137 to 144 lines the substrate pocket; it reads TCIATACM. NADP(+) contacts are provided by residues 195 to 198, tyrosine 213, and 260 to 261; these read SPKN and LE. 281–285 serves as a coordination point for substrate; it reads GQMIL. 350-351 provides a ligand contact to NADP(+); it reads VA.

Belongs to the zinc-containing alcohol dehydrogenase family. Monomer.

It functions in the pathway secondary metabolite biosynthesis. Trans-enoyl reductase; part of the gene cluster that mediates the biosynthesis of a tyrosine-derived cytochalasan acting as a fungal signal recognized by resistant rice plants and leads to avirulence in Pi33 resistant rice cultivars. The first step in the pathway is catalyzed by the hybrid PKS-NRPS ACE1, assisted by the enoyl reductase RAP1, that are responsible for fusion of the tyrosine precursor and the polyketide backbone. The polyketide synthase module (PKS) of ACE1 is responsible for the synthesis of the polyketide backbone and the downstream nonribosomal peptide synthetase (NRPS) amidates the carboxyl end of the polyketide with the tyrosine precursor. Because ACE1 lacks a designated enoylreductase (ER) domain, the required activity is provided the enoyl reductase RAP1. Reduction by the hydrolyase ORFZ, followed by dehydration and intra-molecular Diels-Alder cyclization by the Diels-Alderase ORF3 then yield the required isoindolone-fused macrocycle. A number of oxidative steps catalyzed by the tailoring enzymes identified within the cluster, including cytochrome P450 monooxygenases CYP1 to CYP4, the FAD-linked oxidoreductase OXR2 and the short-chain dehydrogenase/reductase OXR1, are further required to afford the final cytochalasans that confer avirulence and which have still to be identified. The monooxygenase CYP1 has been shown to be a site-selective C-18 hydroxylase whereas the function of CYP3 is the site-selective epoxidation of the C-6/C-7 olefin that is present in some intermediate compounds. Finally, SYN2 and RAP2 are not required for avirulence in Pi33 resistant rice cultivars. The chain is Trans-enoyl reductase RAP1 from Pyricularia oryzae (strain 70-15 / ATCC MYA-4617 / FGSC 8958) (Rice blast fungus).